The following is a 486-amino-acid chain: Vacuolar-processing enzyme beta-isozyme (486 aa).

The signal sequence occupies residues 1–21; it reads MAKSCYFRPALLLLLVLLVHA. Residue H169 is part of the active site. C211 (nucleophile) is an active-site residue. Residues C244 and C258 are joined by a disulfide bond. N309 carries N-linked (GlcNAc...) asparagine glycosylation. 2 cysteine pairs are disulfide-bonded: C420–C450 and C432–C467.

This sequence belongs to the peptidase C13 family. In terms of processing, auto-catalytic activation. In terms of tissue distribution, seed specific. Also expressed in the flowers and buds.

It is found in the vacuole. The protein localises to the protein storage vacuole. The catalysed reaction is Hydrolysis of proteins and small molecule substrates at -Asn-|-Xaa- bonds.. Its function is as follows. Asparagine-specific endopeptidase involved in the processing of vacuolar seed protein precursors into the mature forms. Probably involved in post-translational proteolysis of seed storage proteins in the protein storage vacuole of developing seeds. This chain is Vacuolar-processing enzyme beta-isozyme, found in Arabidopsis thaliana (Mouse-ear cress).